A 156-amino-acid chain; its full sequence is Pilin-like protein PilA1 (156 aa).

The propeptide at 1-5 is leader sequence; that stretch reads MTRRG. N-methylleucine is present on leucine 6. A helical transmembrane segment spans residues 6 to 29; that stretch reads LTLLELLLVLGILGVLLGLALPLL.

It is found in the cell inner membrane. It localises to the cell outer membrane. The protein localises to the periplasm. Plays an essential role in natural DNA transformation but is not required for pilus biogenesis. The sequence is that of Pilin-like protein PilA1 (pilA1) from Thermus thermophilus (strain ATCC BAA-163 / DSM 7039 / HB27).